Reading from the N-terminus, the 395-residue chain is S-adenosylmethionine synthase (395 aa).

His-14 serves as a coordination point for ATP. Residue Asp-16 participates in Mg(2+) binding. Glu-42 is a binding site for K(+). Residues Glu-55 and Gln-98 each coordinate L-methionine. Residues 98-108 (QSPDIAMGVDK) are flexible loop. ATP contacts are provided by residues 175 to 177 (DGK), 242 to 243 (RF), Asp-251, 257 to 258 (RK), Ala-274, and Lys-278. Residue Asp-251 coordinates L-methionine. Lys-282 serves as a coordination point for L-methionine.

The protein belongs to the AdoMet synthase family. As to quaternary structure, homotetramer; dimer of dimers. Mg(2+) is required as a cofactor. K(+) serves as cofactor.

It localises to the cytoplasm. It carries out the reaction L-methionine + ATP + H2O = S-adenosyl-L-methionine + phosphate + diphosphate. The protein operates within amino-acid biosynthesis; S-adenosyl-L-methionine biosynthesis; S-adenosyl-L-methionine from L-methionine: step 1/1. Functionally, catalyzes the formation of S-adenosylmethionine (AdoMet) from methionine and ATP. The overall synthetic reaction is composed of two sequential steps, AdoMet formation and the subsequent tripolyphosphate hydrolysis which occurs prior to release of AdoMet from the enzyme. This chain is S-adenosylmethionine synthase, found in Thermosipho melanesiensis (strain DSM 12029 / CIP 104789 / BI429).